Consider the following 397-residue polypeptide: DNA-binding protein (397 aa).

Residues cysteine 116 and histidine 118 each contribute to the Zn(2+) site. The tract at residues 129 to 161 is flexible loop; that stretch reads IEMAATSESGVAALKEGRGAVEINRWGRQVVKI. Zn(2+)-binding residues include cysteine 169, cysteine 185, cysteine 225, cysteine 227, cysteine 276, and cysteine 289. The tract at residues 335-397 is C-terminal arm, DBP binding; the sequence is ALLPEGSVNE…IVLESSEEDE (63 aa). Positions 338–397 are disordered; the sequence is PEGSVNEDENPFGLDNSEDEEEVVPPSPPSPARKRTRTTVAEVHHKKKKKIVLESSEEDE. Residues 342 to 360 are compositionally biased toward acidic residues; sequence VNEDENPFGLDNSEDEEEV.

It belongs to the adenoviridae E2A DNA-binding protein family. In terms of assembly, homomultimerizes on viral ssDNA bound to pTP. Forms a initiation complex with viral polymerase, pTP and hosts NFIA and POU2F1/OCT1. Interacts with host SRCAP.

It localises to the host nucleus. In terms of biological role, plays a role in the elongation phase of viral strand displacement replication by unwinding the template in an ATP-independent fashion, employing its capacity to form multimers. Also enhances the rate of initiation. Released from template upon second strand synthesis. Assembles in complex with viral pTP, viral pol, host NFIA and host POU2F1/OCT1 on viral origin of replication. Covers the whole ssDNA genome during synthesis. The complementary strand synthesis induces its relese from DNA template. May inhibit cellular transcription mediated by the interaction between host SRCAP and CBP. This chain is DNA-binding protein, found in Snake adenovirus serotype 1 (SnAdV-1).